An 88-amino-acid polypeptide reads, in one-letter code: Small ribosomal subunit protein bS20 (88 aa).

Residues 1–21 (MANSKSAKKRALQSEKRRQHN) are compositionally biased toward basic residues. The interval 1-27 (MANSKSAKKRALQSEKRRQHNASRSSM) is disordered.

This sequence belongs to the bacterial ribosomal protein bS20 family.

Its function is as follows. Binds directly to 16S ribosomal RNA. The polypeptide is Small ribosomal subunit protein bS20 (Shewanella piezotolerans (strain WP3 / JCM 13877)).